The chain runs to 265 residues: Glutamate racemase (265 aa).

Residues 7-8 (DS) and 39-40 (YG) contribute to the substrate site. Cys70 acts as the Proton donor/acceptor in catalysis. 71-72 (NT) serves as a coordination point for substrate. Cys177 acts as the Proton donor/acceptor in catalysis.

The protein belongs to the aspartate/glutamate racemases family.

It carries out the reaction L-glutamate = D-glutamate. Its pathway is cell wall biogenesis; peptidoglycan biosynthesis. Its function is as follows. Provides the (R)-glutamate required for cell wall biosynthesis. This chain is Glutamate racemase, found in Prochlorococcus marinus (strain NATL1A).